Reading from the N-terminus, the 130-residue chain is Protein ApaG (130 aa).

The ApaG domain maps to 3 to 127 (RATTRKIQVT…FSLDVPHMAR (125 aa)).

This chain is Protein ApaG, found in Azorhizobium caulinodans (strain ATCC 43989 / DSM 5975 / JCM 20966 / LMG 6465 / NBRC 14845 / NCIMB 13405 / ORS 571).